A 401-amino-acid polypeptide reads, in one-letter code: Hemorrhagic metalloproteinase-disintegrin-like kaouthiagin (401 aa).

Positions 14-208 (KYIEFYVIVD…DRPQCILNKP (195 aa)) constitute a Peptidase M12B domain. Positions 17 and 101 each coordinate Ca(2+). An N-linked (GlcNAc...) asparagine glycan is attached at Asn-112. 3 disulfides stabilise this stretch: Cys-125-Cys-203, Cys-164-Cys-187, and Cys-166-Cys-171. His-149 serves as a coordination point for Zn(2+). The active site involves Glu-150. Residues His-153 and His-159 each coordinate Zn(2+). Positions 203, 206, 218, 221, 223, 225, 228, and 231 each coordinate Ca(2+). The region spanning 216–285 (PAICGNYFVE…ECPTDSLQRN (70 aa)) is the Disintegrin domain. 11 disulfide bridges follow: Cys-219/Cys-248, Cys-230/Cys-243, Cys-232/Cys-238, Cys-257/Cys-277, Cys-264/Cys-296, Cys-289/Cys-301, Cys-308/Cys-358, Cys-323/Cys-366, Cys-336/Cys-346, Cys-353/Cys-389, and Cys-383/Cys-394. The D/ECD-tripeptide motif lies at 263–265 (DCD). Residues Asp-265, Leu-266, Glu-268, and Asp-280 each coordinate Ca(2+).

Belongs to the venom metalloproteinase (M12B) family. P-III subfamily. P-IIIa sub-subfamily. In terms of assembly, monomer. Zn(2+) serves as cofactor. In terms of tissue distribution, expressed by the venom gland.

The protein localises to the secreted. Functionally, snake venom zinc protease that inhibits hemostasis by binding and cleaving the vWF in humans. Also has and inhibitory effect on the collagen-induced platelet aggregation. The polypeptide is Hemorrhagic metalloproteinase-disintegrin-like kaouthiagin (Naja kaouthia (Monocled cobra)).